Reading from the N-terminus, the 356-residue chain is Probable cysteine protease RDL6 (356 aa).

Residues 1 to 26 (MGFVRPVCMTILFLLIVFVLSAPSSA) form the signal peptide. The propeptide at 27–132 (MDLPATSGGH…RRYVPLAGDQ (106 aa)) is activation peptide. N-linked (GlcNAc...) asparagine glycosylation is found at asparagine 37 and asparagine 86. 3 disulfides stabilise this stretch: cysteine 154–cysteine 195, cysteine 188–cysteine 229, and cysteine 288–cysteine 339. Residue cysteine 157 is part of the active site. Active-site residues include histidine 294 and asparagine 314.

This sequence belongs to the peptidase C1 family.

In terms of biological role, probable thiol protease. This chain is Probable cysteine protease RDL6, found in Arabidopsis thaliana (Mouse-ear cress).